Reading from the N-terminus, the 479-residue chain is Glycogen synthase (479 aa).

Lys15 contacts ADP-alpha-D-glucose.

This sequence belongs to the glycosyltransferase 1 family. Bacterial/plant glycogen synthase subfamily.

The enzyme catalyses [(1-&gt;4)-alpha-D-glucosyl](n) + ADP-alpha-D-glucose = [(1-&gt;4)-alpha-D-glucosyl](n+1) + ADP + H(+). It functions in the pathway glycan biosynthesis; glycogen biosynthesis. Its function is as follows. Synthesizes alpha-1,4-glucan chains using ADP-glucose. This Pectobacterium carotovorum subsp. carotovorum (strain PC1) protein is Glycogen synthase.